The primary structure comprises 248 residues: 26.2 kDa heat shock protein, mitochondrial (248 aa).

Residues 1 to 32 (MASTVALKGRPLATLLRQLLAADAPPAATGRP) constitute a mitochondrion transit peptide. The interval 26-48 (PAATGRPVAAAPAASGKPVTAPA) is disordered. The sHSP domain maps to 139–248 (ATAAARRGGW…RKDVFQVNVE (110 aa)).

It belongs to the small heat shock protein (HSP20) family. May form oligomeric structures.

Its subcellular location is the mitochondrion. The sequence is that of 26.2 kDa heat shock protein, mitochondrial (HSP26.2) from Oryza sativa subsp. japonica (Rice).